A 102-amino-acid chain; its full sequence is Small ribosomal subunit protein uS10 (102 aa).

The protein belongs to the universal ribosomal protein uS10 family. Part of the 30S ribosomal subunit.

In terms of biological role, involved in the binding of tRNA to the ribosomes. This chain is Small ribosomal subunit protein uS10, found in Thermotoga neapolitana (strain ATCC 49049 / DSM 4359 / NBRC 107923 / NS-E).